The primary structure comprises 239 residues: Glandular kallikrein, prostatic (239 aa).

The Peptidase S1 domain occupies V1–A236. 5 cysteine pairs are disulfide-bonded: C7/C151, C26/C42, C128/C197, C162/C176, and C187/C212. The Charge relay system role is filled by H41. N78 carries N-linked (GlcNAc...) asparagine glycosylation. D96 (charge relay system) is an active-site residue. N-linked (GlcNAc...) asparagine glycosylation occurs at N169. S191 (charge relay system) is an active-site residue.

The protein belongs to the peptidase S1 family. Kallikrein subfamily.

The enzyme catalyses Preferential cleavage of Arg-|-Xaa bonds in small molecule substrates. Highly selective action to release kallidin (lysyl-bradykinin) from kininogen involves hydrolysis of Met-|-Xaa or Leu-|-Xaa.. In terms of biological role, glandular kallikreins cleave Met-Lys and Arg-Ser bonds in kininogen to release Lys-bradykinin. This is Glandular kallikrein, prostatic from Cavia porcellus (Guinea pig).